Reading from the N-terminus, the 949-residue chain is Lon protease homolog, mitochondrial (949 aa).

The transit peptide at M1–G65 directs the protein to the mitochondrion. Disordered stretches follow at residues D68 to G94 and E213 to G240. A Lon N-terminal domain is found at L112–F359. Basic residues predominate over residues K223–K232. G512–T519 is an ATP binding site. The 191-residue stretch at V748–R938 folds into the Lon proteolytic domain. Active-site residues include S844 and K887.

Belongs to the peptidase S16 family. In terms of assembly, homohexamer. Organized in a ring with a central cavity. The ATP-binding and proteolytic domains (AP-domain) form a hexameric chamber, while the N-terminal domain is arranged as a trimer of dimers. DNA and RNA binding is stimulated by substrate and inhibited by ATP binding. Interacts with TWNK and mitochondrial DNA polymerase subunit POLG. Detected in liver &gt; heart &gt; kidney &gt; testis.

Its subcellular location is the mitochondrion matrix. It carries out the reaction Hydrolysis of proteins in presence of ATP.. In terms of biological role, ATP-dependent serine protease that mediates the selective degradation of misfolded, unassembled or oxidatively damaged polypeptides as well as certain short-lived regulatory proteins in the mitochondrial matrix. Endogenous substrates include mitochondrial steroidogenic acute regulatory (StAR) protein, DELE1, helicase Twinkle (TWNK) and the large ribosomal subunit protein MRPL32/bL32m. MRPL32/bL32m is protected from degradation by LONP1 when it is bound to a nucleic acid (RNA), but TWNK is not. May also have a chaperone function in the assembly of inner membrane protein complexes. Participates in the regulation of mitochondrial gene expression and in the maintenance of the integrity of the mitochondrial genome. Binds to mitochondrial promoters and RNA in a single-stranded, site-specific, and strand-specific manner. May regulate mitochondrial DNA replication and/or gene expression using site-specific, single-stranded DNA binding to target the degradation of regulatory proteins binding to adjacent sites in mitochondrial promoters. This is Lon protease homolog, mitochondrial (Lonp1) from Mus musculus (Mouse).